We begin with the raw amino-acid sequence, 274 residues long: Serine protease 28 (274 aa).

The N-terminal stretch at 1 to 26 (MFRLLLLALSCLESTVFMASVSISRS) is a signal peptide. A Peptidase S1 domain is found at 31-274 (IVGGQRTPPG…SLAWIHQHIQ (244 aa)). An intrachain disulfide couples cysteine 62 to cysteine 78. Histidine 77 functions as the Charge relay system in the catalytic mechanism. An N-linked (GlcNAc...) asparagine glycan is attached at asparagine 106. Aspartate 124 functions as the Charge relay system in the catalytic mechanism. Disulfide bonds link cysteine 158-cysteine 233, cysteine 191-cysteine 214, and cysteine 223-cysteine 251. Serine 227 serves as the catalytic Charge relay system.

The protein belongs to the peptidase S1 family. In terms of assembly, homooligomer, heterodimer and heterotetramer. Able to form homo- and hetero- tetrameric structures. Heterotetramer is far more stable than the homotetramer. In terms of tissue distribution, expressed in embryos throughout the preimplantation period, during blastocyst hatching and embryo outgrowth. Found in uterus especially in glandular epithelium.

Its subcellular location is the secreted. With respect to regulation, inhibited by benzamidine, (4-amidino-phenyl)-methane-sulfonyl (APMSF), N-p-tosyl-L-lysine chloromethylketone (TLCK), gabexate, mesylate, BABIM and trypsin soybean inhibitor (TSI). Involved in embryo hatching and implantation. The polypeptide is Serine protease 28 (Prss28) (Mus musculus (Mouse)).